Consider the following 346-residue polypeptide: KH domain-containing, RNA-binding, signal transduction-associated protein 3 (346 aa).

An involved in homodimerization region spans residues 1-160 (MEEKYLPELM…IKKFLIPDYN (160 aa)). A Glycyl lysine isopeptide (Lys-Gly) (interchain with G-Cter in SUMO2) cross-link involves residue Lys4. A KH domain is found at 61-127 (LIPVKQFPKF…AKYFHLNDDL (67 aa)). The interval 212-251 (RPVGVVVPRGTPTPRGVLSTRGPVSRGRGLLTPRARGVPP) is interaction with SIAH1. A compositionally biased stretch (low complexity) spans 213–228 (PVGVVVPRGTPTPRGV). Disordered stretches follow at residues 213 to 267 (PVGV…ETYG) and 318 to 346 (QEEW…YGRY). The span at 253 to 262 (GYRPPPPPPT) shows a compositional bias: pro residues.

It belongs to the KHDRBS family. As to quaternary structure, self-associates to form homooligomers; dimerization increases RNA affinity. Interacts with KHDRBS2/SLM-1. Interacts with KHDRBS1/SAM68; heterooligomer formation of KHDRBS family proteins may modulate RNA substrate specificity. Interacts with the splicing regulatory proteins SFRS9, SAFB and YTHDC1. Interacts with HNRPL. Interacts with RBMX, RBMY1A1, p85 subunit of PI3-kinase, SERPINB5. Interacts with SIAH1 which promotes targeting for degradation. In terms of processing, phosphorylated on tyrosine residues. Isoform 1 C-terminal region is tyrosine-rich, but isoform 2 lacking this C-terminal region is also tyrosine-phosphorylated. As to expression, ubiquitous with higher expression in testis, skeletal muscle and brain. Expressed in the kidney only in podocytes, the glomerular epithelial cells of the kidney. Strongly expressed after meiosis.

The protein resides in the nucleus. RNA-binding protein that plays a role in the regulation of alternative splicing and influences mRNA splice site selection and exon inclusion. Binds preferentially to the 5'-[AU]UAAA-3' motif in vitro. Binds optimally to RNA containing 5'-[AU]UAA-3' as a bipartite motif spaced by more than 15 nucleotides. Binds poly(A). RNA-binding abilities are down-regulated by tyrosine kinase PTK6. Involved in splice site selection of vascular endothelial growth factor. In vitro regulates CD44 alternative splicing by direct binding to purine-rich exonic enhancer. Can regulate alternative splicing of neurexins NRXN1-3 in the laminin G-like domain 6 containing the evolutionary conserved neurexin alternative spliced segment 4 (AS4) involved in neurexin selective targeting to postsynaptic partners such as neuroligins and LRRTM family members. Targeted, cell-type specific splicing regulation of NRXN1 at AS4 is involved in neuronal glutamatergic synapse function and plasticity. May regulate expression of KHDRBS2/SLIM-1 in defined brain neuron populations by modifying its alternative splicing. Can bind FABP9 mRNA. May play a role as a negative regulator of cell growth. Inhibits cell proliferation. Its function is as follows. (Microbial infection) Involved in post-transcriptional regulation of HIV-1 gene expression. The sequence is that of KH domain-containing, RNA-binding, signal transduction-associated protein 3 (KHDRBS3) from Homo sapiens (Human).